Here is an 830-residue protein sequence, read N- to C-terminus: Periplasmic nitrate reductase (830 aa).

The segment at residues 1 to 31 (MKLSRRDFMKANAAVAAAAAAGMTIPTVAKA) is a signal peptide (tat-type signal). The 57-residue stretch at 39–95 (IKWDKAPCRFCGTGCGVLVGTQNGRIVASQGDPDSPVNRGLNCIKGYFLPKIMYGKD) folds into the 4Fe-4S Mo/W bis-MGD-type domain. Cys-46, Cys-49, Cys-53, and Cys-81 together coordinate [4Fe-4S] cluster. Residues Lys-83, Gln-150, Asn-175, Cys-179, 212–219 (WGSNMAEM), 243–247 (STYEH), 262–264 (QTD), Met-372, Gln-376, Asn-482, 508–509 (SD), Lys-531, Asp-558, and 718–727 (TGRVLEHWHT) each bind Mo-bis(molybdopterin guanine dinucleotide). Phe-794 is a substrate binding site. Asn-802 and Lys-819 together coordinate Mo-bis(molybdopterin guanine dinucleotide).

The protein belongs to the prokaryotic molybdopterin-containing oxidoreductase family. NasA/NapA/NarB subfamily. In terms of assembly, component of the periplasmic nitrate reductase NapAB complex composed of NapA and NapB. Requires [4Fe-4S] cluster as cofactor. The cofactor is Mo-bis(molybdopterin guanine dinucleotide). Post-translationally, predicted to be exported by the Tat system. The position of the signal peptide cleavage has not been experimentally proven.

Its subcellular location is the periplasm. It carries out the reaction 2 Fe(II)-[cytochrome] + nitrate + 2 H(+) = 2 Fe(III)-[cytochrome] + nitrite + H2O. Its function is as follows. Catalytic subunit of the periplasmic nitrate reductase complex NapAB. Receives electrons from NapB and catalyzes the reduction of nitrate to nitrite. The sequence is that of Periplasmic nitrate reductase from Yersinia pestis bv. Antiqua (strain Antiqua).